A 464-amino-acid chain; its full sequence is tRNA(Ile)-lysidine synthase (464 aa).

Residue 26 to 31 participates in ATP binding; that stretch reads SGGPDS.

It belongs to the tRNA(Ile)-lysidine synthase family.

It localises to the cytoplasm. The catalysed reaction is cytidine(34) in tRNA(Ile2) + L-lysine + ATP = lysidine(34) in tRNA(Ile2) + AMP + diphosphate + H(+). In terms of biological role, ligates lysine onto the cytidine present at position 34 of the AUA codon-specific tRNA(Ile) that contains the anticodon CAU, in an ATP-dependent manner. Cytidine is converted to lysidine, thus changing the amino acid specificity of the tRNA from methionine to isoleucine. In Geobacillus kaustophilus (strain HTA426), this protein is tRNA(Ile)-lysidine synthase.